Consider the following 434-residue polypeptide: UDP-N-acetylmuramoylalanine--D-glutamate ligase (434 aa).

An ATP-binding site is contributed by 113–119; it reads GSNGKST.

The protein belongs to the MurCDEF family.

Its subcellular location is the cytoplasm. It carries out the reaction UDP-N-acetyl-alpha-D-muramoyl-L-alanine + D-glutamate + ATP = UDP-N-acetyl-alpha-D-muramoyl-L-alanyl-D-glutamate + ADP + phosphate + H(+). It functions in the pathway cell wall biogenesis; peptidoglycan biosynthesis. In terms of biological role, cell wall formation. Catalyzes the addition of glutamate to the nucleotide precursor UDP-N-acetylmuramoyl-L-alanine (UMA). In Pasteurella multocida (strain Pm70), this protein is UDP-N-acetylmuramoylalanine--D-glutamate ligase.